The chain runs to 103 residues: Small ribosomal subunit protein uS10 (103 aa).

The protein belongs to the universal ribosomal protein uS10 family. Part of the 30S ribosomal subunit.

Functionally, involved in the binding of tRNA to the ribosomes. The sequence is that of Small ribosomal subunit protein uS10 from Bordetella avium (strain 197N).